Consider the following 127-residue polypeptide: Small ribosomal subunit protein uS13 (127 aa).

Residues 95–118 (GLPVRGQRTHTNARTRKGPKKGLV) are compositionally biased toward basic residues. The segment at 95–127 (GLPVRGQRTHTNARTRKGPKKGLVRKAAAPAPK) is disordered.

This sequence belongs to the universal ribosomal protein uS13 family. In terms of assembly, part of the 30S ribosomal subunit. Forms a loose heterodimer with protein S19. Forms two bridges to the 50S subunit in the 70S ribosome.

Functionally, located at the top of the head of the 30S subunit, it contacts several helices of the 16S rRNA. In the 70S ribosome it contacts the 23S rRNA (bridge B1a) and protein L5 of the 50S subunit (bridge B1b), connecting the 2 subunits; these bridges are implicated in subunit movement. Contacts the tRNAs in the A and P-sites. In Anaeromyxobacter sp. (strain Fw109-5), this protein is Small ribosomal subunit protein uS13.